A 429-amino-acid chain; its full sequence is Glutamate-1-semialdehyde 2,1-aminomutase 2 (429 aa).

K268 is modified (N6-(pyridoxal phosphate)lysine).

It belongs to the class-III pyridoxal-phosphate-dependent aminotransferase family. HemL subfamily. Homodimer. Pyridoxal 5'-phosphate serves as cofactor.

The protein localises to the cytoplasm. The enzyme catalyses (S)-4-amino-5-oxopentanoate = 5-aminolevulinate. It participates in porphyrin-containing compound metabolism; protoporphyrin-IX biosynthesis; 5-aminolevulinate from L-glutamyl-tRNA(Glu): step 2/2. The polypeptide is Glutamate-1-semialdehyde 2,1-aminomutase 2 (Staphylococcus aureus (strain MRSA252)).